We begin with the raw amino-acid sequence, 790 residues long: Probable copper-transporting ATPase SynA (790 aa).

Residues 1 to 105 (MPAAIVHSAD…IPPLQQQRLQ (105 aa)) lie on the Cytoplasmic side of the membrane. The HMA domain occupies 14–81 (TSILVEVEGM…EITGLGFRAQ (68 aa)). Cu(+)-binding residues include Cys-25 and Cys-28. Residues 106-127 (LAIAAFLLIVSSWGHLGHWLDH) form a helical membrane-spanning segment. Over 128–136 (PLPGTDQLW) the chain is Extracellular. A helical transmembrane segment spans residues 137 to 156 (FHALLATWALLGPGRSILQA). Residues 157-163 (GWQGLRC) are Cytoplasmic-facing. The chain crosses the membrane as a helical span at residues 164-184 (GAPNMNSLVLLGTGSAYLASL). Topologically, residues 185–198 (VALLWPQLGWVCFF) are extracellular. The chain crosses the membrane as a helical span at residues 199–219 (DEPVMLLGFILLGRTLEEQAR). Topologically, residues 220–358 (FRSQAALQNL…KAPVQRFADA (139 aa)) are cytoplasmic. The chain crosses the membrane as a helical span at residues 359-381 (IAGRFVYGVCAIAALTFGFWATL). The Extracellular portion of the chain corresponds to 382 to 420 (GSRWWPQVLQQPLPGLLIHAPHHGMEMAHPHSHSPLLLA). A helical membrane pass occupies residues 421 to 438 (LTLAISVLVVACPCALGL). Topologically, residues 439 to 723 (ATPTAILVAT…NLSQMGLRTI (285 aa)) are cytoplasmic. The active-site 4-aspartylphosphate intermediate is Asp-476. Mg(2+) contacts are provided by Asp-669 and Asp-673. A helical transmembrane segment spans residues 724–743 (RQNLTWALGYNVVMLPLAAG). Over 744–755 (AFLPAYGLALTP) the chain is Extracellular. The chain crosses the membrane as a helical span at residues 756–774 (AIAGACMAVSSLAVVSNSL). Residues 775-790 (LLRYWFRRSLNHSVSV) lie on the Cytoplasmic side of the membrane.

Belongs to the cation transport ATPase (P-type) (TC 3.A.3) family. Type IB subfamily.

Its subcellular location is the cell membrane. It catalyses the reaction Cu(+)(in) + ATP + H2O = Cu(+)(out) + ADP + phosphate + H(+). Its function is as follows. Involved in copper transport. This is Probable copper-transporting ATPase SynA (synA) from Synechococcus elongatus (strain ATCC 33912 / PCC 7942 / FACHB-805) (Anacystis nidulans R2).